The following is a 263-amino-acid chain: Imidazole glycerol phosphate synthase subunit HisF (263 aa).

Active-site residues include Asp-11 and Asp-130.

It belongs to the HisA/HisF family. As to quaternary structure, heterodimer of HisH and HisF.

It localises to the cytoplasm. The catalysed reaction is 5-[(5-phospho-1-deoxy-D-ribulos-1-ylimino)methylamino]-1-(5-phospho-beta-D-ribosyl)imidazole-4-carboxamide + L-glutamine = D-erythro-1-(imidazol-4-yl)glycerol 3-phosphate + 5-amino-1-(5-phospho-beta-D-ribosyl)imidazole-4-carboxamide + L-glutamate + H(+). The protein operates within amino-acid biosynthesis; L-histidine biosynthesis; L-histidine from 5-phospho-alpha-D-ribose 1-diphosphate: step 5/9. Its function is as follows. IGPS catalyzes the conversion of PRFAR and glutamine to IGP, AICAR and glutamate. The HisF subunit catalyzes the cyclization activity that produces IGP and AICAR from PRFAR using the ammonia provided by the HisH subunit. In Synechococcus sp. (strain CC9311), this protein is Imidazole glycerol phosphate synthase subunit HisF.